Consider the following 250-residue polypeptide: Methylthioribulose-1-phosphate dehydratase (250 aa).

A substrate-binding site is contributed by Cys103. Residues His121 and His123 each contribute to the Zn(2+) site. The active-site Proton donor/acceptor is Glu146. His211 provides a ligand contact to Zn(2+).

Belongs to the aldolase class II family. MtnB subfamily. Requires Zn(2+) as cofactor.

It is found in the cytoplasm. The enzyme catalyses 5-(methylsulfanyl)-D-ribulose 1-phosphate = 5-methylsulfanyl-2,3-dioxopentyl phosphate + H2O. Its pathway is amino-acid biosynthesis; L-methionine biosynthesis via salvage pathway; L-methionine from S-methyl-5-thio-alpha-D-ribose 1-phosphate: step 2/6. Its function is as follows. Catalyzes the dehydration of methylthioribulose-1-phosphate (MTRu-1-P) into 2,3-diketo-5-methylthiopentyl-1-phosphate (DK-MTP-1-P). This chain is Methylthioribulose-1-phosphate dehydratase, found in Clavispora lusitaniae (strain ATCC 42720) (Yeast).